Reading from the N-terminus, the 407-residue chain is POC1 centriolar protein homolog A (407 aa).

WD repeat units lie at residues 17–56 (GHRDAVTSVDFSLNTKQLASGSMDSCLMVWHMKPQTRAYR), 59–98 (GHKDAVTCVNFSPSGHLLASGSRDKTVRIWVPNVKGESTV), 101–140 (AHTATVRSVHFCSDGQSFVTASDDKTVKVWSTHRQKFLFS), 143–182 (QHINWVRCAKFSPDGRLIVSASDDKTVKLWDKTSRECVHS), 185–224 (EHGGFVTYVDFHPSGTCIAAAGMDNTVKVWDVRTHRLLQH), 227–266 (LHSAAVNALSFHPSGNYLVTASSDSTLKILDLMEGRLLYT), and 269–308 (GHQGPATTVAFSRTGEYFASGGSDEQVMVWKSNFDIVDYG). Residues 317 to 357 (PATRASSSGTLPEVDPLVPPGRGRSQESMQSHSQEPVSVPQ) form a disordered region. Residues 342 to 357 (QESMQSHSQEPVSVPQ) show a composition bias toward polar residues. A coiled-coil region spans residues 369 to 397 (QLDVLTQTVSILEQRLTLTEDKLKQCLEN).

It belongs to the WD repeat POC1 family. Interacts with POC1B.

It is found in the cytoplasm. The protein localises to the cytoskeleton. It localises to the microtubule organizing center. Its subcellular location is the centrosome. The protein resides in the centriole. It is found in the cilium basal body. The protein localises to the spindle pole. Functionally, plays an important role in centriole assembly and/or stability and ciliogenesis. Involved in early steps of centriole duplication, as well as in the later steps of centriole length control. Acts in concert with POC1B to ensure centriole integrity and proper mitotic spindle formation. The protein is POC1 centriolar protein homolog A (POC1A) of Bos taurus (Bovine).